A 284-amino-acid polypeptide reads, in one-letter code: 4-hydroxybenzoate octaprenyltransferase (284 aa).

Transmembrane regions (helical) follow at residues 13–32 (FNRPIGSFLLMWPTLWALWL), 90–110 (ALMLFCALSILSFILVLFTDL), 112–132 (TILLSFVGLGLAALYPFMKRY), 134–154 (HLPQLFLGLAFSWAIPMAYSA), 164–184 (LWMLFVANCFWTIAYDTYYAM), 200–220 (ILFGQYDLFVIICLQGLTLSL), and 224–244 (IGLLAGLHWLYFVSLIVCVGL).

This sequence belongs to the UbiA prenyltransferase family. Requires Mg(2+) as cofactor.

The protein resides in the cell inner membrane. It catalyses the reaction all-trans-octaprenyl diphosphate + 4-hydroxybenzoate = 4-hydroxy-3-(all-trans-octaprenyl)benzoate + diphosphate. It functions in the pathway cofactor biosynthesis; ubiquinone biosynthesis. In terms of biological role, catalyzes the prenylation of para-hydroxybenzoate (PHB) with an all-trans polyprenyl group. Mediates the second step in the final reaction sequence of ubiquinone-8 (UQ-8) biosynthesis, which is the condensation of the polyisoprenoid side chain with PHB, generating the first membrane-bound Q intermediate 3-octaprenyl-4-hydroxybenzoate. This chain is 4-hydroxybenzoate octaprenyltransferase, found in Marinomonas sp. (strain MWYL1).